Here is a 307-residue protein sequence, read N- to C-terminus: Putative F-box/LRR-repeat protein 22 (307 aa).

The segment covering 1–15 (MVTSSSSPPLATSQL) has biased composition (polar residues). The interval 1 to 26 (MVTSSSSPPLATSQLPVMKGEEKPSN) is disordered. Residues 24-71 (PSNWAELPPDLLSSILLRLSPLEILENARKVCRSWRRVSKDPLIWRRI) enclose the F-box domain. LRR repeat units lie at residues 108-133 (WRFQ…RVKG), 158-183 (YCSI…KLVG), 185-210 (WSHL…HLQL), 212-237 (SNGL…DLRQ), and 244-270 (FGDL…DYNY). Over residues 279 to 289 (IEDEKGEEEEN) the composition is skewed to acidic residues. Residues 279–307 (IEDEKGEEEENYSYGSDDTEYGYRRSADF) are disordered.

This is Putative F-box/LRR-repeat protein 22 (FBL22) from Arabidopsis thaliana (Mouse-ear cress).